The primary structure comprises 290 residues: RWD domain-containing protein 2B (290 aa).

The RWD domain maps to 12–136; that stretch reads SELDLLASMF…EWVKEHAFDY (125 aa).

The polypeptide is RWD domain-containing protein 2B (Rwdd2b) (Mus musculus (Mouse)).